We begin with the raw amino-acid sequence, 214 residues long: uncharacterized protein (214 aa).

Residues 9–31 (FLYFAISVLVNLLFLKILYIYLF) traverse the membrane as a helical segment. Residues 53 to 74 (APPKKPGKPQKKVVKKKPEAVS) form a disordered region. The span at 54–67 (PPKKPGKPQKKVVK) shows a compositional bias: basic residues.

It localises to the membrane. This is an uncharacterized protein from Aquifex aeolicus (strain VF5).